The sequence spans 67 residues: Cold shock-like protein CspE (67 aa).

In terms of domain architecture, CSD spans 5–64 (GKVKWFNSEKGFGFIEVEGGNDVFVHFSAITGDGFKSLDEGQEVSFEVEDGNRGPQAKNV).

Homodimer.

The protein resides in the cytoplasm. In terms of biological role, can bind to ATTGG and CCAAT motifs (Y-box motifs) of single-stranded oligonucleotides. The protein is Cold shock-like protein CspE (cspE) of Bacillus anthracis.